The following is a 306-amino-acid chain: Homeobox protein HMX3 (306 aa).

The disordered stretch occupies residues 95–181 (HTPRTEVPDK…DKKPCRKKKT (87 aa)). 2 stretches are compositionally biased toward basic and acidic residues: residues 117 to 143 (GERD…KSPE) and 153 to 174 (EEGK…PDKK). The homeobox DNA-binding region spans 178–237 (KKKTRTVFSRSQVFQLESTFDMKRYLSSSERAGLAASLHLTETQVKIWFQNRRNKWKRQL).

The protein belongs to the HMX homeobox family.

Its subcellular location is the nucleus. Functionally, transcription factor involved in specification of neuronal cell types and which is required for inner ear and hypothalamus development. Binds to the 5'-CAAGTG-3' core sequence. May act as a stage-specific inhibitor of anf1 in the anterior neural plate during the development. This chain is Homeobox protein HMX3 (hmx3), found in Xenopus tropicalis (Western clawed frog).